The primary structure comprises 320 residues: Very-long-chain 3-oxoacyl-CoA reductase (320 aa).

A helical membrane pass occupies residues 17 to 37 (FWYLGVVAAVWWGLRAAWCLL). 56 to 85 (GKWAVVTGATDGIGKAYAEELAKRGMNIVL) provides a ligand contact to NADP(+). Helical transmembrane passes span 189–209 (GVIL…LTVY) and 283–303 (AIMG…SLGM). Ser196 provides a ligand contact to substrate. Residue Tyr209 is the Proton acceptor of the active site.

Belongs to the short-chain dehydrogenases/reductases (SDR) family. 17-beta-HSD 3 subfamily.

It localises to the endoplasmic reticulum membrane. It carries out the reaction a very-long-chain (3R)-3-hydroxyacyl-CoA + NADP(+) = a very-long-chain 3-oxoacyl-CoA + NADPH + H(+). It catalyses the reaction 17beta-estradiol + NAD(+) = estrone + NADH + H(+). The catalysed reaction is 17beta-estradiol + NADP(+) = estrone + NADPH + H(+). The enzyme catalyses 3-oxooctadecanoyl-CoA + NADPH + H(+) = (3R)-hydroxyoctadecanoyl-CoA + NADP(+). It carries out the reaction (7Z,10Z,13Z,16Z)-3-oxodocosatetraenoyl-CoA + NADPH + H(+) = (3R)-hydroxy-(7Z,10Z,13Z,16Z)-docosatetraenoyl-CoA + NADP(+). It catalyses the reaction 3-oxo-(7Z,10Z,13Z,16Z,19Z)-docosapentaenoyl-CoA + NADPH + H(+) = (3R)-hydroxy-(7Z,10Z,13Z,16Z,19Z)-docosapentaenoyl-CoA + NADP(+). The catalysed reaction is (8Z,11Z,14Z)-3-oxoeicosatrienoyl-CoA + NADPH + H(+) = (3R)-hydroxy-(8Z,11Z,14Z)-eicosatrienoyl-CoA + NADP(+). It functions in the pathway lipid metabolism; fatty acid biosynthesis. It participates in steroid biosynthesis; estrogen biosynthesis. Its function is as follows. Catalyzes the second of the four reactions of the long-chain fatty acids elongation cycle. This endoplasmic reticulum-bound enzymatic process, allows the addition of two carbons to the chain of long- and very long-chain fatty acids/VLCFAs per cycle. This enzyme has a 3-ketoacyl-CoA reductase activity, reducing 3-ketoacyl-CoA to 3-hydroxyacyl-CoA, within each cycle of fatty acid elongation. Thereby, it may participate in the production of VLCFAs of different chain lengths that are involved in multiple biological processes as precursors of membrane lipids and lipid mediators. May also catalyze the transformation of estrone (E1) into estradiol (E2) and play a role in estrogen formation. This is Very-long-chain 3-oxoacyl-CoA reductase (hsd17b12) from Xenopus tropicalis (Western clawed frog).